The chain runs to 316 residues: BTB/POZ domain-containing protein Y57A10B.3 (316 aa).

Residues 1–21 (MSAMRRCTCFIICLLTSYTYG) form the signal peptide. N-linked (GlcNAc...) asparagine glycans are attached at residues asparagine 91, asparagine 107, asparagine 118, asparagine 133, asparagine 191, and asparagine 260. The region spanning 158 to 226 (RDAVLIVEGK…VHSTATFPND (69 aa)) is the BTB domain.

It localises to the secreted. In Caenorhabditis elegans, this protein is BTB/POZ domain-containing protein Y57A10B.3 (btb-14).